The sequence spans 185 residues: Large ribosomal subunit protein uL5 (185 aa).

The protein belongs to the universal ribosomal protein uL5 family. In terms of assembly, part of the 50S ribosomal subunit; part of the 5S rRNA/L5/L18/L25 subcomplex. Contacts the 5S rRNA and the P site tRNA. Forms a bridge to the 30S subunit in the 70S ribosome.

In terms of biological role, this is one of the proteins that bind and probably mediate the attachment of the 5S RNA into the large ribosomal subunit, where it forms part of the central protuberance. In the 70S ribosome it contacts protein S13 of the 30S subunit (bridge B1b), connecting the 2 subunits; this bridge is implicated in subunit movement. Contacts the P site tRNA; the 5S rRNA and some of its associated proteins might help stabilize positioning of ribosome-bound tRNAs. In Azorhizobium caulinodans (strain ATCC 43989 / DSM 5975 / JCM 20966 / LMG 6465 / NBRC 14845 / NCIMB 13405 / ORS 571), this protein is Large ribosomal subunit protein uL5.